A 397-amino-acid polypeptide reads, in one-letter code: Putative nickel insertion protein (397 aa).

It belongs to the LarC family.

The chain is Putative nickel insertion protein from Synechococcus sp. (strain JA-3-3Ab) (Cyanobacteria bacterium Yellowstone A-Prime).